The following is a 236-amino-acid chain: B-cell antigen receptor complex-associated protein alpha chain (236 aa).

The first 32 residues, 1–32, serve as a signal peptide directing secretion; it reads MPGGPGLLQALCATTFLLFLISAGGLGPGSQA. The Ig-like C2-type domain maps to 33–122; it reads LWVDGGPPSM…EKDLNQKILS (90 aa). Topologically, residues 33–151 are extracellular; sequence LWVDGGPPSM…LDMGEGTKNN (119 aa). Cysteines 54 and 109 form a disulfide. N-linked (GlcNAc...) asparagine glycans are attached at residues asparagine 66 and asparagine 76. The chain crosses the membrane as a helical span at residues 152-172; it reads IITAEGIILLFCAVVPGTLLL. Residues 173 to 236 lie on the Cytoplasmic side of the membrane; sequence FRKRWQNMKF…GDGDVQLEKP (64 aa). One can recognise an ITAM domain in the interval 185-213; the sequence is DAQDDYEDENLYEGLNLDDCSMYEDISRG. Tyrosine 196 carries the phosphotyrosine; by SRC-type Tyr-kinases modification. Tyrosine 207 is subject to Phosphotyrosine. Arginine 212 is modified (asymmetric dimethylarginine; by PRMT1). At tyrosine 218 the chain carries Phosphotyrosine; by Tyr-kinases.

Heterodimer of alpha and beta chains; disulfide-linked. Part of the B-cell antigen receptor complex where the alpha/beta chain heterodimer is non-covalently associated with an antigen-specific membrane-bound surface immunoglobulin of two heavy chains and two light chains. Interacts through its phosphorylated ITAM domain with the SH2 domains of SYK which stimulates SYK autophosphorylation and activation. Also interacts, when phosphorylated on Tyr-207, with the SH2 domain of BLNK/SLP65, bringing BLNK into proximity with SYK and allowing SYK to phosphorylate BLNK which is necessary for trafficking of the BCR to late endosomes. Interacts with Src-family tyrosine kinases including FYN and LYN, increasing their activity. Post-translationally, phosphorylated on tyrosine, serine and threonine residues upon B-cell activation. Phosphorylation of tyrosine residues by Src-family kinases, including LYN, is an early and essential feature of the BCR signaling cascade. The phosphorylated tyrosines serve as docking sites for SH2-domain containing kinases, leading to their activation which in turn leads to phosphorylation of downstream targets. Phosphorylation of serine and threonine residues may prevent subsequent tyrosine phosphorylation. In terms of processing, arginine methylation in the ITAM domain may interfere with the binding of SYK. It promotes signals leading to B-cell differentiation.

The protein localises to the cell membrane. In terms of biological role, required in cooperation with CD79B for initiation of the signal transduction cascade activated by binding of antigen to the B-cell antigen receptor complex (BCR) which leads to internalization of the complex, trafficking to late endosomes and antigen presentation. Also required for BCR surface expression and for efficient differentiation of pro- and pre-B-cells. Stimulates SYK autophosphorylation and activation. Binds to BLNK, bringing BLNK into proximity with SYK and allowing SYK to phosphorylate BLNK. Also interacts with and increases activity of some Src-family tyrosine kinases. Represses BCR signaling during development of immature B-cells. This Canis lupus familiaris (Dog) protein is B-cell antigen receptor complex-associated protein alpha chain (CD79A).